Consider the following 271-residue polypeptide: Ribosomal RNA small subunit methyltransferase A (271 aa).

S-adenosyl-L-methionine contacts are provided by N22, L24, G49, E70, D96, and N116.

It belongs to the class I-like SAM-binding methyltransferase superfamily. rRNA adenine N(6)-methyltransferase family. RsmA subfamily.

It localises to the cytoplasm. It catalyses the reaction adenosine(1518)/adenosine(1519) in 16S rRNA + 4 S-adenosyl-L-methionine = N(6)-dimethyladenosine(1518)/N(6)-dimethyladenosine(1519) in 16S rRNA + 4 S-adenosyl-L-homocysteine + 4 H(+). In terms of biological role, specifically dimethylates two adjacent adenosines (A1518 and A1519) in the loop of a conserved hairpin near the 3'-end of 16S rRNA in the 30S particle. May play a critical role in biogenesis of 30S subunits. The polypeptide is Ribosomal RNA small subunit methyltransferase A (Sphingopyxis alaskensis (strain DSM 13593 / LMG 18877 / RB2256) (Sphingomonas alaskensis)).